The following is a 101-amino-acid chain: Small ribosomal subunit protein uS14 (101 aa).

It belongs to the universal ribosomal protein uS14 family. In terms of assembly, part of the 30S ribosomal subunit. Contacts proteins S3 and S10.

Its function is as follows. Binds 16S rRNA, required for the assembly of 30S particles and may also be responsible for determining the conformation of the 16S rRNA at the A site. The polypeptide is Small ribosomal subunit protein uS14 (Actinobacillus pleuropneumoniae serotype 3 (strain JL03)).